A 206-amino-acid polypeptide reads, in one-letter code: Small ribosomal subunit protein uS4 (206 aa).

In terms of domain architecture, S4 RNA-binding spans 96–156; sequence GRLDNVVYRM…EKAKQQARIK (61 aa).

Belongs to the universal ribosomal protein uS4 family. In terms of assembly, part of the 30S ribosomal subunit. Contacts protein S5. The interaction surface between S4 and S5 is involved in control of translational fidelity.

In terms of biological role, one of the primary rRNA binding proteins, it binds directly to 16S rRNA where it nucleates assembly of the body of the 30S subunit. Functionally, with S5 and S12 plays an important role in translational accuracy. In Vibrio campbellii (strain ATCC BAA-1116), this protein is Small ribosomal subunit protein uS4.